Consider the following 149-residue polypeptide: Putative mediator of RNA polymerase II transcription subunit 22 (149 aa).

Belongs to the Mediator complex subunit 22 family. As to quaternary structure, component of the Mediator complex.

The protein localises to the nucleus. Its function is as follows. Component of the Mediator complex, a coactivator involved in the regulated transcription of nearly all RNA polymerase II-dependent genes. Mediator functions as a bridge to convey information from gene-specific regulatory proteins to the basal RNA polymerase II transcription machinery. Mediator is recruited to promoters by direct interactions with regulatory proteins and serves as a scaffold for the assembly of a functional preinitiation complex with RNA polymerase II and the general transcription factors. This chain is Putative mediator of RNA polymerase II transcription subunit 22 (med22), found in Dictyostelium discoideum (Social amoeba).